The following is a 137-amino-acid chain: Basic phospholipase A2 PeBP(R)-I/II (137 aa).

The first 16 residues, 1 to 16 (MRTLWIMAVLLLGVEG), serve as a signal peptide directing secretion. 7 disulfides stabilise this stretch: cysteine 42-cysteine 131, cysteine 44-cysteine 60, cysteine 59-cysteine 111, cysteine 65-cysteine 137, cysteine 66-cysteine 104, cysteine 73-cysteine 97, and cysteine 91-cysteine 102. Residue histidine 63 is part of the active site. Residue aspartate 105 is part of the active site.

The protein belongs to the phospholipase A2 family. Group II subfamily. R49 sub-subfamily. Expressed by the venom gland.

It localises to the secreted. The enzyme catalyses a 1,2-diacyl-sn-glycero-3-phosphocholine + H2O = a 1-acyl-sn-glycero-3-phosphocholine + a fatty acid + H(+). In terms of biological role, snake venom phospholipases A2 that have myotoxic, and edema-inducing activity, as well as extremely weak lipolytic activity. PLA2 catalyzes the calcium-dependent hydrolysis of the 2-acyl groups in 3-sn-phosphoglycerides. The sequence is that of Basic phospholipase A2 PeBP(R)-I/II from Protobothrops elegans (Elegant pitviper).